The chain runs to 100 residues: MTKSELIERIVTHQGLLSSKDVELAIKTMLEQMSQCLATGDRIEIRGFGSFSLHYRAPRVGRNPKTGQSVSLEGKFVPHFKPGKELRDRVNEDEHEEAHT.

Positions 81-100 (KPGKELRDRVNEDEHEEAHT) are disordered. Over residues 82–100 (PGKELRDRVNEDEHEEAHT) the composition is skewed to basic and acidic residues.

This sequence belongs to the bacterial histone-like protein family. In terms of assembly, heterodimer of an alpha and a beta chain.

This protein is one of the two subunits of integration host factor, a specific DNA-binding protein that functions in genetic recombination as well as in transcriptional and translational control. This is Integration host factor subunit beta (ihfB) from Pseudomonas putida (Arthrobacter siderocapsulatus).